A 274-amino-acid polypeptide reads, in one-letter code: Chromatin modification-related protein YNG2 (274 aa).

Residues E121–D194 form a disordered region. The segment covering T166–D180 has biased composition (basic and acidic residues). The PHD-type zinc-finger motif lies at N215–E264. Residues C218, C220, C231, C236, H242, C245, C258, and C261 each contribute to the Zn(2+) site.

The protein belongs to the ING family. In terms of assembly, interacts with H3K4me3 and to a lesser extent with H3K4me2. Component of the NuA4 histone acetyltransferase complex.

Its subcellular location is the nucleus. Its function is as follows. Component of the NuA4 histone acetyltransferase complex which is involved in transcriptional activation of selected genes principally by acetylation of nucleosomal histone H4 and H2A. The NuA4 complex is also involved in DNA repair. Involved in cell cycle progression and meiosis. The sequence is that of Chromatin modification-related protein YNG2 (YNG2) from Candida glabrata (strain ATCC 2001 / BCRC 20586 / JCM 3761 / NBRC 0622 / NRRL Y-65 / CBS 138) (Yeast).